The following is a 362-amino-acid chain: Phospho-N-acetylmuramoyl-pentapeptide-transferase (362 aa).

10 helical membrane-spanning segments follow: residues 21 to 41 (YITF…FLLG), 75 to 95 (TMGG…WADL), 100 to 120 (VWAV…DDFL), 136 to 156 (LVVQ…LMPG), 170 to 190 (LMIP…MGAS), 201 to 221 (GLAI…AYLV), 225 to 245 (IFSH…AVFC), 247 to 267 (ALIG…AVFM), 290 to 310 (IVLA…IVQV), and 339 to 359 (TVVI…LATL).

The protein belongs to the glycosyltransferase 4 family. MraY subfamily. Requires Mg(2+) as cofactor.

It localises to the cell inner membrane. The enzyme catalyses UDP-N-acetyl-alpha-D-muramoyl-L-alanyl-gamma-D-glutamyl-meso-2,6-diaminopimeloyl-D-alanyl-D-alanine + di-trans,octa-cis-undecaprenyl phosphate = di-trans,octa-cis-undecaprenyl diphospho-N-acetyl-alpha-D-muramoyl-L-alanyl-D-glutamyl-meso-2,6-diaminopimeloyl-D-alanyl-D-alanine + UMP. The protein operates within cell wall biogenesis; peptidoglycan biosynthesis. Catalyzes the initial step of the lipid cycle reactions in the biosynthesis of the cell wall peptidoglycan: transfers peptidoglycan precursor phospho-MurNAc-pentapeptide from UDP-MurNAc-pentapeptide onto the lipid carrier undecaprenyl phosphate, yielding undecaprenyl-pyrophosphoryl-MurNAc-pentapeptide, known as lipid I. The chain is Phospho-N-acetylmuramoyl-pentapeptide-transferase from Acidiphilium cryptum (strain JF-5).